The primary structure comprises 173 residues: Alpha-crystallin A chain (173 aa).

Position 1 is an N-acetylmethionine (methionine 1). Residues 1–63 (MDIAIQHPWF…RTVLDSGISE (63 aa)) form a required for complex formation with BFSP1 and BFSP2 region. At glutamine 6 the chain carries Deamidated glutamine; partial. A Phosphoserine modification is found at serine 45. Glutamine 50 is modified (deamidated glutamine; partial). A sHSP domain is found at 52–162 (LFRTVLDSGI…GHSERAIPVS (111 aa)). Lysine 70 carries the N6-acetyllysine modification. Glutamine 90 is modified (deamidated glutamine; partial). N6-acetyllysine is present on lysine 99. Histidine 100 contributes to the Zn(2+) binding site. Asparagine 101 carries the deamidated asparagine; partial modification. The Zn(2+) site is built by glutamate 102 and histidine 107. At serine 122 the chain carries Phosphoserine. Asparagine 123 is modified (deamidated asparagine; partial). A disordered region spans residues 144-173 (PKVPSGVDAGHSERAIPVSREEKPSSAPSS). Residues 153-167 (GHSERAIPVSREEKP) are compositionally biased toward basic and acidic residues. Histidine 154 serves as a coordination point for Zn(2+). Serine 162 carries an O-linked (GlcNAc) serine glycan.

It belongs to the small heat shock protein (HSP20) family. In terms of assembly, heteromer composed of three CRYAA and one CRYAB subunits. Inter-subunit bridging via zinc ions enhances stability, which is crucial as there is no protein turn over in the lens. Can also form homodimers and homotetramers (dimers of dimers) which serve as the building blocks of homooligomers. Within homooligomers, the zinc-binding motif is created from residues of 3 different molecules. His-100 and Glu-102 from one molecule are ligands of the zinc ion, and His-107 and His-154 residues from additional molecules complete the site with tetrahedral coordination geometry. Part of a complex required for lens intermediate filament formation composed of BFSP1, BFSP2 and CRYAA. Acetylation at Lys-70 may increase chaperone activity. Post-translationally, undergoes age-dependent proteolytical cleavage at the C-terminus.

The protein resides in the cytoplasm. Its subcellular location is the nucleus. Functionally, contributes to the transparency and refractive index of the lens. Acts as a chaperone, preventing aggregation of various proteins under a wide range of stress conditions. Required for the correct formation of lens intermediate filaments as part of a complex composed of BFSP1, BFSP2 and CRYAA. This chain is Alpha-crystallin A chain (CRYAA), found in Ovis aries (Sheep).